Here is a 519-residue protein sequence, read N- to C-terminus: Halolysin (519 aa).

The tat-type signal signal peptide spans methionine 1–valine 27. Residues threonine 28–leucine 116 constitute a propeptide that is removed on maturation. The Peptidase S8 domain maps to glutamine 127–valine 400. Catalysis depends on charge relay system residues aspartate 154, histidine 193, and serine 347. Positions serine 386–serine 425 are disordered. Gly residues predominate over residues glycine 405–serine 415.

The protein belongs to the peptidase S8 family. In terms of processing, predicted to be exported by the Tat system. The position of the signal peptide cleavage has not been experimentally proven.

It is found in the secreted. Probable secreted halophilic serine protease showing proteolytic activity toward the protease general substrate azocasein. This chain is Halolysin (hly), found in Haloferax mediterranei (strain ATCC 33500 / DSM 1411 / JCM 8866 / NBRC 14739 / NCIMB 2177 / R-4) (Halobacterium mediterranei).